Reading from the N-terminus, the 161-residue chain is Ragulator complex protein LAMTOR1 (161 aa).

The segment at 1 to 43 is disordered; it reads MGCCYSSENEDSDQDREERKLLLDPSSTPTKALNGAEPNYHSL. Residue G2 is the site of N-myristoyl glycine attachment. S-palmitoyl cysteine attachment occurs at residues C3 and C4. K20 is covalently cross-linked (Glycyl lysine isopeptide (Lys-Gly) (interchain with G-Cter in ubiquitin)). S27 is subject to Phosphoserine. T28 carries the post-translational modification Phosphothreonine. K31 is covalently cross-linked (Glycyl lysine isopeptide (Lys-Gly) (interchain with G-Cter in ubiquitin)). Phosphoserine occurs at positions 42 and 56. K60 participates in a covalent cross-link: Glycyl lysine isopeptide (Lys-Gly) (interchain with G-Cter in ubiquitin). Position 98 is a phosphoserine (S98). Glycyl lysine isopeptide (Lys-Gly) (interchain with G-Cter in ubiquitin) cross-links involve residues K103 and K104. Positions 121–161 are interaction with LAMTOR2 and LAMTOR3; that stretch reads SEPIPFSDLQQVSRIAAYAYSALSQIRVDAKEELVVQFGIP. Position 141 is a phosphoserine (S141).

Belongs to the LAMTOR1 family. Part of the Ragulator complex composed of LAMTOR1, LAMTOR2, LAMTOR3, LAMTOR4 and LAMTOR5. LAMTOR4 and LAMTOR5 form a heterodimer that interacts, through LAMTOR1, with a LAMTOR2, LAMTOR3 heterodimer. Interacts with LAMTOR2 and LAMTOR3; the interaction is direct. The Ragulator complex interacts with both the mTORC1 complex and heterodimers constituted of the Rag GTPases RagA/RRAGA, RagB/RRAGB, RagC/RRAGC and RagD/RRAGD; regulated by amino acid availability. The Ragulator complex interacts with SLC38A9; the probable amino acid sensor. Component of the lysosomal folliculin complex (LFC), composed of FLCN, FNIP1 (or FNIP2), RagA/RRAGA or RagB/RRAGB GDP-bound, RagC/RRAGC or RagD/RRAGD GTP-bound, and Ragulator. Associates with the lysosomal V-ATPase complex; interaction promotes the guanine nucleotide exchange factor (GEF) of the Ragulator complex. Interacts with MMP14. Interacts with CDKN1B; prevents the interaction of CDKN1B with RHOA leaving RHOA in a form accessible to activation by ARHGEF2. Interacts with PIP4P1. N-terminal myristoylation and palmitoylation mediates its recruitment to lysosome membranes, thereby promoting localization of the Ragulator complex to lysosomes. N-myristoylation by NMT1 is required for palmitoylation at Cys-3 and Cys-4. In terms of processing, ubiquitinated at Lys-60, Lys-103 and Lys-104 by UBE3A in neurons, promoting its degradation by the proteasome, thereby limiting mTORC1 signaling and activity-dependent synaptic remodeling. Ubiquitination at Lys-20 impairs the association with the lysosomal V-ATPase complex. Deubiquitination at Lys-20 by USP32 promotes the association with the lysosomal V-ATPase complex and subsequent activation of the mTORC1 complex.

It localises to the lysosome membrane. Its subcellular location is the late endosome membrane. Key component of the Ragulator complex, a multiprotein complex involved in amino acid sensing and activation of mTORC1, a signaling complex promoting cell growth in response to growth factors, energy levels, and amino acids. Activated by amino acids through a mechanism involving the lysosomal V-ATPase, the Ragulator plays a dual role for the small GTPases Rag (RagA/RRAGA, RagB/RRAGB, RagC/RRAGC and/or RagD/RRAGD): it (1) acts as a guanine nucleotide exchange factor (GEF), activating the small GTPases Rag and (2) mediates recruitment of Rag GTPases to the lysosome membrane. Activated Ragulator and Rag GTPases function as a scaffold recruiting mTORC1 to lysosomes where it is in turn activated. LAMTOR1 is directly responsible for anchoring the Ragulator complex to the lysosomal membrane. LAMTOR1 wraps around the other subunits of the Ragulator complex to hold them in place and interacts with the Rag GTPases, thereby playing a key role in the recruitment of the mTORC1 complex to lysosomes. Also involved in the control of embryonic stem cells differentiation via non-canonical RagC/RRAGC and RagD/RRAGD activation: together with FLCN, it is necessary to recruit and activate RagC/RRAGC and RagD/RRAGD at the lysosomes, and to induce exit of embryonic stem cells from pluripotency via non-canonical, mTOR-independent TFE3 inactivation. Also required for late endosomes/lysosomes biogenesis it may regulate both the recycling of receptors through endosomes and the MAPK signaling pathway through recruitment of some of its components to late endosomes. May be involved in cholesterol homeostasis regulating LDL uptake and cholesterol release from late endosomes/lysosomes. May also play a role in RHOA activation. This is Ragulator complex protein LAMTOR1 from Mus musculus (Mouse).